A 173-amino-acid chain; its full sequence is Large ribosomal subunit protein uL5 (173 aa).

The protein belongs to the universal ribosomal protein uL5 family. Component of the large ribosomal subunit.

The protein localises to the nucleus. It is found in the cytoplasm. Its function is as follows. Component of the ribosome, a large ribonucleoprotein complex responsible for the synthesis of proteins in the cell. The small ribosomal subunit (SSU) binds messenger RNAs (mRNAs) and translates the encoded message by selecting cognate aminoacyl-transfer RNA (tRNA) molecules. The large subunit (LSU) contains the ribosomal catalytic site termed the peptidyl transferase center (PTC), which catalyzes the formation of peptide bonds, thereby polymerizing the amino acids delivered by tRNAs into a polypeptide chain. The nascent polypeptides leave the ribosome through a tunnel in the LSU and interact with protein factors that function in enzymatic processing, targeting, and the membrane insertion of nascent chains at the exit of the ribosomal tunnel. This Encephalitozoon cuniculi (strain GB-M1) (Microsporidian parasite) protein is Large ribosomal subunit protein uL5 (RPL11).